Consider the following 137-residue polypeptide: Large ribosomal subunit protein uL16 (137 aa).

Belongs to the universal ribosomal protein uL16 family. In terms of assembly, part of the 50S ribosomal subunit.

In terms of biological role, binds 23S rRNA and is also seen to make contacts with the A and possibly P site tRNAs. The chain is Large ribosomal subunit protein uL16 from Spiroplasma citri.